Consider the following 155-residue polypeptide: Protein archease-like (155 aa).

3 residues coordinate Ca(2+): Asp-26, Asp-154, and Ile-155.

The protein belongs to the archease family.

Functionally, component of the tRNA-splicing ligase complex required to facilitate the enzymatic turnover of catalytic subunit RtcB. This is Protein archease-like from Caenorhabditis briggsae.